The primary structure comprises 253 residues: Chitooligosaccharide deacetylase (253 aa).

The Mg(2+) site is built by H61 and H126.

It belongs to the YdjC deacetylase family. ChbG subfamily. In terms of assembly, homodimer. Mg(2+) serves as cofactor.

Its subcellular location is the cytoplasm. It catalyses the reaction N,N'-diacetylchitobiose + H2O = N-acetyl-beta-D-glucosaminyl-(1-&gt;4)-D-glucosamine + acetate. The catalysed reaction is diacetylchitobiose-6'-phosphate + H2O = N'-monoacetylchitobiose-6'-phosphate + acetate. Its pathway is glycan degradation; chitin degradation. Involved in the degradation of chitin. ChbG is essential for growth on the acetylated chitooligosaccharides chitobiose and chitotriose but is dispensable for growth on cellobiose and chitosan dimer, the deacetylated form of chitobiose. Deacetylation of chitobiose-6-P and chitotriose-6-P is necessary for both the activation of the chb promoter by the regulatory protein ChbR and the hydrolysis of phosphorylated beta-glucosides by the phospho-beta-glucosidase ChbF. Catalyzes the removal of only one acetyl group from chitobiose-6-P to yield monoacetylchitobiose-6-P, the inducer of ChbR and the substrate of ChbF. The chain is Chitooligosaccharide deacetylase from Yersinia enterocolitica serotype O:8 / biotype 1B (strain NCTC 13174 / 8081).